We begin with the raw amino-acid sequence, 490 residues long: MADSEFEEFHRPIFEPHTIAGFGSGAGSKKNNPHAFYSLIPNDDLEDSHSSKSDGDGSDQEDGIGLVDHEPKMRQVEDDELGDGLKVTLSSDGSLDTNDSFNSHRHHPLNHQDAIGGFLGMDTSGLGGNSAPVTIGASTDLLAPNTAATRRRRKLPEIPKNKKSSILHLLGGSNFGSLADEFRNGGGGGIPPAVRSGQQRSFLSLKCGYLMDEDSSPDSERMQSLGDVDSGHSTAHSPNDFKSMSPQITSPVSQSPFPPPFGGVPFGQLEMLEATHRGLHKFVPRHHDEIELEIGDAIYVQKEAEDLWCEGVNLRTGRQGIFPSAYAVDLDYNEFDPTVQLVKKERYLLGYLGSVETLAHKGTGVVCQAVRKIVGEYGNSPTGQTCILEVSDQGLRMVDRSGPNQNKKDKKPCIDYFYSLKNVSFCAFHPRDHRFIGFITKHPTVQRFACHVFKGSESTRPVAEAVGRAFQRFYQKFIETAYPIEDIYIE.

Disordered regions lie at residues 1–71 (MADS…DHEP) and 213–254 (EDSS…PVSQ). Over residues 231–249 (GHSTAHSPNDFKSMSPQIT) the composition is skewed to polar residues. The 62-residue stretch at 271 to 332 (MLEATHRGLH…PSAYAVDLDY (62 aa)) folds into the SH3 domain. The PID domain occupies 344–479 (KERYLLGYLG…FQRFYQKFIE (136 aa)).

Belongs to the JIP scaffold family. As to quaternary structure, forms homo- and heterooligomeric complexes. Binds Hep, a dual specificity protein kinase in the JNK pathway, but not its downstream target bsk. The C-terminal region interacts with the kinesin light chain protein, Klc, and the C-terminal PTY motif of amyloid-beta protein precursor-like protein, Appl. Expressed in the brain, CNS, PNS and cells posterior to the morphogenetic furrow in the eye imaginal disk of late embryos.

Its subcellular location is the cytoplasm. In terms of biological role, the JNK-interacting protein (JIP) group of scaffold proteins selectively mediates JNK signaling by aggregating specific components of the MAPK cascade to form a functional JNK signaling module. May function as a regulator of vesicle transport, through interactions with the JNK-signaling components and motor proteins. This is JNK-interacting protein 1 (Aplip1) from Drosophila melanogaster (Fruit fly).